The chain runs to 278 residues: MAIRKYKPTTPGRRGSSVSDFAEITRSTPEKSLVRPLHGRGGRNAHGRITTRHKGGGHKRAYRLIDFRRNDKDGVPAKVAHIEYDPNRTARIALLHYADGEKRYIIAPKGLFQGAPVESGAGADIKPGNNLPLRNIPTGTTIHAVELRPGGGAKMARSAGSSIQLLGKEGTYATLRMPSGEIRRVDVRCRASIGEVGNAEQSNINWGKAGRMRWKGKRPTVRGVVMNPVDHPHGGGEGKTSGGRHPVSPWGKPEGRTRKNKASDKLIVRRRRTGKNKR.

Disordered regions lie at residues 1–58 (MAIR…GGGH) and 225–278 (VMNP…KNKR). Basic residues predominate over residues 37-58 (LHGRGGRNAHGRITTRHKGGGH). Positions 253–267 (PEGRTRKNKASDKLI) are enriched in basic and acidic residues. Over residues 268–278 (VRRRRTGKNKR) the composition is skewed to basic residues.

The protein belongs to the universal ribosomal protein uL2 family. Part of the 50S ribosomal subunit. Forms a bridge to the 30S subunit in the 70S ribosome.

One of the primary rRNA binding proteins. Required for association of the 30S and 50S subunits to form the 70S ribosome, for tRNA binding and peptide bond formation. It has been suggested to have peptidyltransferase activity; this is somewhat controversial. Makes several contacts with the 16S rRNA in the 70S ribosome. The sequence is that of Large ribosomal subunit protein uL2 from Rhodococcus opacus (strain B4).